We begin with the raw amino-acid sequence, 319 residues long: Cytochrome f (319 aa).

The first 34 residues, 1–34 (MQNRNTYEWAKKMTRLISVLVMIHIITRTSISNA), serve as a signal peptide directing secretion. Residues tyrosine 35, cysteine 55, cysteine 58, and histidine 59 each contribute to the heme site. Residues 287 to 304 (GLLLFLASVILAQIFLVL) form a helical membrane-spanning segment.

It belongs to the cytochrome f family. In terms of assembly, the 4 large subunits of the cytochrome b6-f complex are cytochrome b6, subunit IV (17 kDa polypeptide, petD), cytochrome f and the Rieske protein, while the 4 small subunits are PetG, PetL, PetM and PetN. The complex functions as a dimer. Heme serves as cofactor.

It is found in the plastid. It localises to the chloroplast thylakoid membrane. In terms of biological role, component of the cytochrome b6-f complex, which mediates electron transfer between photosystem II (PSII) and photosystem I (PSI), cyclic electron flow around PSI, and state transitions. The protein is Cytochrome f (petA) of Pinus thunbergii (Japanese black pine).